Consider the following 254-residue polypeptide: Protein Thf1 (254 aa).

A coiled-coil region spans residues 183 to 217 (SDKLQKDLDLYRSNLEKMEQARITMEEAIQADRRK). The segment covering 213–227 (ADRRKREQREQEKLA) has biased composition (basic and acidic residues). A disordered region spans residues 213–254 (ADRRKREQREQEKLAKAAAAEAPAALEASSDNPEPETSETPS). Residues 228–240 (KAAAAEAPAALEA) show a composition bias toward low complexity. Residues 245 to 254 (PEPETSETPS) are compositionally biased toward acidic residues.

The protein belongs to the THF1 family.

In terms of biological role, may be involved in photosynthetic membrane biogenesis. This chain is Protein Thf1, found in Synechococcus elongatus (strain ATCC 33912 / PCC 7942 / FACHB-805) (Anacystis nidulans R2).